Reading from the N-terminus, the 899-residue chain is Androgen receptor (899 aa).

The segment at 1-537 is modulating; sequence MEVQLGLGRV…PIDYYFPPQK (537 aa). Residues 1–566 are interaction with ZNF318; that stretch reads MEVQLGLGRV…GSCKVFFKRA (566 aa). Disordered regions lie at residues 35–146 and 175–222; these read QNPG…LSLL and QQQQ…LGGN. Serine 61 carries the post-translational modification Phosphoserine; by CDK9. Serine 75 bears the Phosphoserine mark. Composition is skewed to low complexity over residues 94-103 and 175-193; these read QPSQQQAASE and QQQQQQQHQQQHQQHQQQQ. Polar residues predominate over residues 210–222; the sequence is APSSSKDSYLGGN. Tyrosine 218 carries the phosphotyrosine; by CSK modification. Serine 251 is modified (phosphoserine). The residue at position 262 (tyrosine 262) is a Phosphotyrosine; by CSK and TNK2. 4 positions are modified to phosphotyrosine; by CSK: tyrosine 302, tyrosine 341, tyrosine 352, and tyrosine 357. A Phosphotyrosine; by CSK and TNK2 modification is found at tyrosine 358. Lysine 381 participates in a covalent cross-link: Glycyl lysine isopeptide (Lys-Gly) (interchain with G-Cter in SUMO). Tyrosine 388 bears the Phosphotyrosine; by CSK mark. The segment at 436 to 471 is disordered; the sequence is EGQLYGPGGGGGSSSPSDAGPVAPYGYTRPPQGLTS. A Glycyl lysine isopeptide (Lys-Gly) (interchain with G-Cter in SUMO) cross-link involves residue lysine 500. Phosphotyrosine; by CSK occurs at positions 514 and 531. Residues 531-898 are interaction with LPXN; the sequence is YYFPPQKTCL…GKVKPIYFHT (368 aa). A DNA-binding region (nuclear receptor) is located at residues 538 to 611; it reads TCLICGDEAS…AGMTLGARKL (74 aa). NR C4-type zinc fingers lie at residues 539 to 559 and 575 to 599; these read CLICGDEASGCHYGALTCGSC and CASRNDCTIDKFRRKNCPSCRLRKC. An interaction with HIPK3 region spans residues 551–641; it reads YGALTCGSCK…TEDPSQKMTV (91 aa). The tract at residues 571-898 is interaction with CCAR1; sequence QKYLCASRND…GKVKPIYFHT (328 aa). An interaction with KAT7 region spans residues 604–898; it reads MTLGARKLKK…GKVKPIYFHT (295 aa). Serine 630 is subject to Phosphoserine. One can recognise an NR LBD domain in the interval 648–879; it reads ECQPIFLNVL…DFPEMMAEII (232 aa). 17beta-hydroxy-5alpha-androstan-3-one-binding residues include asparagine 685 and arginine 732. Residues lysine 825 and lysine 827 each participate in a glycyl lysine isopeptide (Lys-Gly) (interchain with G-Cter in ubiquitin) cross-link. Threonine 857 is a binding site for 17beta-hydroxy-5alpha-androstan-3-one. Tyrosine 895 carries the post-translational modification Phosphotyrosine; by CSK.

This sequence belongs to the nuclear hormone receptor family. NR3 subfamily. As to quaternary structure, binds DNA as a homodimer. Part of a ternary complex containing AR, EFCAB6/DJBP and PARK7. Interacts with HIPK3 and NR0B2 in the presence of androgen. The ligand binding domain interacts with KAT7/HBO1 in the presence of dihydrotestosterone. Interacts with EFCAB6/DJBP, PQBP1, RANBP9, SPDEF, SRA1, TGFB1I1, ZNF318 and RREB1. The AR N-terminal poly-Gln region binds Ran resulting in enhancement of AR-mediated transactivation. Ran-binding decreases as the poly-Gln length increases. Interacts with ZMIZ1/ZIMP10 and ZMIZ2/ZMIP7 which both enhance its transactivation activity. Interacts with RBAK. Interacts via the ligand-binding domain with LXXLL and FXXLF motifs from NCOA1, NCOA2, NCOA3 and MAGEA11. Interacts (via nuclear receptor DNA binding domain and nuclear receptor ligand binding domain) with NCOA4. Interacts with HIP1 (via coiled coil domain). Interacts with SLC30A9 and RAD54L2/ARIP4. Interacts with MACROD1 (via macro domain). Interacts (via ligand-binding domain) with TRIM68. Interacts with TNK2. Interacts with USP26. Interacts with RNF6. Interacts (regulated by RNF6 probably through polyubiquitination) with RNF14; regulates AR transcriptional activity. Interacts with PRMT2 and TRIM24. Interacts with RACK1. Interacts with RANBP10; this interaction enhances hormone-induced AR transcriptional activity. Interacts with PRPF6 in a hormone-independent way; this interaction enhances hormone-induced AR transcriptional activity. Interacts with STK4/MST1. Interacts with ZIPK/DAPK3. Interacts with LPXN. Interacts with MAK. Part of a complex containing AR, MAK and NCOA3. Interacts with CRY1. Interacts with CCAR1 and GATA2. Interacts with BUD31. Interacts with ARID4A. Interacts with ARID4B. Interacts (via NR LBD domain) with ZBTB7A; the interaction is direct and androgen-dependent. Interacts with NCOR1. Interacts with NCOR2. Interacts with CRY2 in a ligand-dependent manner. Post-translationally, phosphorylated in prostate cancer cells in response to several growth factors including EGF. Phosphorylation is induced by c-Src kinase (CSK). Tyr-514 is one of the major phosphorylation sites and an increase in phosphorylation and Src kinase activity is associated with prostate cancer progression. Phosphorylation by TNK2 enhances the DNA-binding and transcriptional activity. Phosphorylation at Ser-61 by CDK9 regulates AR promoter selectivity and cell growth. Phosphorylation by PAK6 leads to AR-mediated transcription inhibition. In terms of processing, sumoylated on Lys-381 (major) and Lys-500. Ubiquitinated. Deubiquitinated by USP26. 'Lys-6' and 'Lys-27'-linked polyubiquitination by RNF6 modulates AR transcriptional activity and specificity. Palmitoylated by ZDHHC7 and ZDHHC21. Palmitoylation is required for plasma membrane targeting and for rapid intracellular signaling via ERK and AKT kinases and cAMP generation.

It localises to the nucleus. The protein localises to the cytoplasm. Its function is as follows. Steroid hormone receptors are ligand-activated transcription factors that regulate eukaryotic gene expression and affect cellular proliferation and differentiation in target tissues. Transcription factor activity is modulated by bound coactivator and corepressor proteins like ZBTB7A that recruits NCOR1 and NCOR2 to the androgen response elements/ARE on target genes, negatively regulating androgen receptor signaling and androgen-induced cell proliferation. Transcription activation is also down-regulated by NR0B2. Activated, but not phosphorylated, by HIPK3 and ZIPK/DAPK3. The chain is Androgen receptor (Ar) from Mus musculus (Mouse).